Here is a 225-residue protein sequence, read N- to C-terminus: Uracil-DNA glycosylase (225 aa).

The Proton acceptor role is filled by D64.

This sequence belongs to the uracil-DNA glycosylase (UDG) superfamily. UNG family.

It is found in the cytoplasm. The catalysed reaction is Hydrolyzes single-stranded DNA or mismatched double-stranded DNA and polynucleotides, releasing free uracil.. Functionally, excises uracil residues from the DNA which can arise as a result of misincorporation of dUMP residues by DNA polymerase or due to deamination of cytosine. This Lachnoclostridium phytofermentans (strain ATCC 700394 / DSM 18823 / ISDg) (Clostridium phytofermentans) protein is Uracil-DNA glycosylase.